The chain runs to 292 residues: Cytidine deaminase (292 aa).

CMP/dCMP-type deaminase domains are found at residues 47-167 (TPLK…FGPK) and 186-292 (DHQD…YYSL). Residue 88–90 (NQE) participates in substrate binding. Residue His101 participates in Zn(2+) binding. Catalysis depends on Glu103, which acts as the Proton donor. Zn(2+) contacts are provided by Cys128 and Cys131.

This sequence belongs to the cytidine and deoxycytidylate deaminase family. In terms of assembly, homodimer. Requires Zn(2+) as cofactor.

The catalysed reaction is cytidine + H2O + H(+) = uridine + NH4(+). It carries out the reaction 2'-deoxycytidine + H2O + H(+) = 2'-deoxyuridine + NH4(+). Its function is as follows. This enzyme scavenges exogenous and endogenous cytidine and 2'-deoxycytidine for UMP synthesis. In Haemophilus influenzae (strain 86-028NP), this protein is Cytidine deaminase.